Here is a 432-residue protein sequence, read N- to C-terminus: Adenylosuccinate synthetase (432 aa).

GTP is bound by residues 13-19 and 41-43; these read GDEGKGK and GHT. Asp-14 functions as the Proton acceptor in the catalytic mechanism. Residues Asp-14 and Gly-41 each coordinate Mg(2+). IMP is bound by residues 14 to 17, 39 to 42, Thr-130, Arg-144, Gln-225, Thr-240, and Arg-304; these read DEGK and NAGH. Catalysis depends on His-42, which acts as the Proton donor. 300–306 lines the substrate pocket; it reads AVTGRPR. GTP is bound by residues Arg-306, 332 to 334, and 415 to 417; these read KLD and STG.

This sequence belongs to the adenylosuccinate synthetase family. In terms of assembly, homodimer. The cofactor is Mg(2+).

It localises to the cytoplasm. It catalyses the reaction IMP + L-aspartate + GTP = N(6)-(1,2-dicarboxyethyl)-AMP + GDP + phosphate + 2 H(+). It participates in purine metabolism; AMP biosynthesis via de novo pathway; AMP from IMP: step 1/2. Functionally, plays an important role in the de novo pathway of purine nucleotide biosynthesis. Catalyzes the first committed step in the biosynthesis of AMP from IMP. The chain is Adenylosuccinate synthetase from Actinobacillus succinogenes (strain ATCC 55618 / DSM 22257 / CCUG 43843 / 130Z).